We begin with the raw amino-acid sequence, 367 residues long: Histidinol-phosphate aminotransferase 1 (367 aa).

N6-(pyridoxal phosphate)lysine is present on lysine 229.

This sequence belongs to the class-II pyridoxal-phosphate-dependent aminotransferase family. Histidinol-phosphate aminotransferase subfamily. In terms of assembly, homodimer. Pyridoxal 5'-phosphate is required as a cofactor.

It carries out the reaction L-histidinol phosphate + 2-oxoglutarate = 3-(imidazol-4-yl)-2-oxopropyl phosphate + L-glutamate. The protein operates within amino-acid biosynthesis; L-histidine biosynthesis; L-histidine from 5-phospho-alpha-D-ribose 1-diphosphate: step 7/9. This is Histidinol-phosphate aminotransferase 1 (hisC1) from Mesorhizobium japonicum (strain LMG 29417 / CECT 9101 / MAFF 303099) (Mesorhizobium loti (strain MAFF 303099)).